The sequence spans 217 residues: Protein TNT (217 aa).

Residues 1–217 form a disordered region; that stretch reads MSLVPGQHCS…HSTKQTGGKE (217 aa). Composition is skewed to polar residues over residues 20–36 and 45–61; these read SPIT…TEFS and TSPQ…SQGP. Low complexity-rich tracts occupy residues 91-104 and 128-139; these read EPSL…LQSP and QSSESHVSSVQH. Polar residues-rich tracts occupy residues 177 to 191 and 207 to 217; these read RLNT…SQLG and AHSTKQTGGKE.

As to expression, preferentially expressed in teratocarcinoma rather than in normal testis.

This Homo sapiens (Human) protein is Protein TNT (C16orf82).